A 1085-amino-acid polypeptide reads, in one-letter code: Activating transcription factor 7-interacting protein 1 (1085 aa).

9 disordered regions span residues 1-22, 47-109, 127-245, 329-381, 469-499, 517-560, 650-843, 889-910, and 932-975; these read MDNTDEPQKKVFKARKTMRASD, GKHE…VNVT, LGSN…NTDS, PNKS…VHSK, AAKEDMKKKQENTPNPSLSSGKAASSTANAN, RNVG…TSSP, ASTN…TTIH, NSVRGAVMPSPSLRPVNPQTGS, and GAPQ…ANTS. A compositionally biased stretch (polar residues) spans 54-64; that stretch reads SDLNSPLSNTD. Basic and acidic residues-rich tracts occupy residues 82-91 and 133-150; these read SEIKRPESRA and NFHEENNIKNRLDQRESD. 2 stretches are compositionally biased toward polar residues: residues 151-165 and 173-182; these read TPSGENKSNCDNSFS and NDITIISNSP. Composition is skewed to basic and acidic residues over residues 347–379 and 469–479; these read EREVVHKEEEKHTERGEVSRRKRSKSEDMDSVH and AAKEDMKKKQE. Residues 446 to 480 are a coiled coil; the sequence is NKRHKTVLTELQAKITRLTKRFGAAKEDMKKKQEN. Composition is skewed to low complexity over residues 487-499, 529-547, and 651-666; these read SSGKAASSTANAN, APVSAAPASSLAAPQTPAS, and STNTTKPNNSPSVSSP. Residues 667-717 show a composition bias toward polar residues; the sequence is GVQRNSPASAGSVRTTLAVQAVSTTHPVAQTTRTSLPTVGTSGLHNSTSSR. Positions 732-743 are enriched in low complexity; that stretch reads TAPTEPPTITAP. Polar residues-rich tracts occupy residues 746 to 775, 792 to 810, and 830 to 843; these read ENQTSRPPTDSSANKRTAEGPTQSVKVTGS, SSQAEAKKQNQTASTAQSI, and TGVPTSGPSQTTIH. Residues 950–968 show a composition bias toward pro residues; sequence PRPVHPAPLPEAPQPPRLP. One can recognise a Fibronectin type-III domain in the interval 976–1082; the sequence is LPQKPQLKLA…DPQSTDVISS (107 aa).

Belongs to the MCAF family.

Its subcellular location is the nucleus. In terms of biological role, recruiter that couples transcriptional factors to general transcription apparatus and thereby modulates transcription regulation and chromatin formation. Can both act as an activator or a repressor depending on the context. Mediates MBD1-dependent transcriptional repression, probably by recruiting complexes containing histone methyltransferase activity. May belong to a complex that represses transcription and couples DNA methylation and histone H3 'Lys-9' trimethylation (H3K9me3). This is Activating transcription factor 7-interacting protein 1 (ATF7IP) from Gallus gallus (Chicken).